Consider the following 221-residue polypeptide: Protein-disulfide oxidoreductase DsbI (221 aa).

A helical membrane pass occupies residues 27–47 (FLWLLMAVAMGGLIILAHSFF). A disulfide bond links C56 and C59. The next 2 membrane-spanning stretches (helical) occupy residues 64-84 (FAMFVMVFGGLIAAINPKNII) and 85-105 (LKLIGCLAAFYGSIMGIKFSV). C128 and C154 are oxidised to a cystine. A helical membrane pass occupies residues 189–209 (LAFYEYGAGVPAGVWAMFCTV).

Belongs to the DsbB family. DsbI subfamily. Interacts with DsbL.

The protein localises to the cell inner membrane. In terms of biological role, required for disulfide bond formation in some proteins. Part of a redox system composed of DsbI and DsbL that mediates formation of an essential disulfide bond in AssT. The sequence is that of Protein-disulfide oxidoreductase DsbI from Lelliottia amnigena (Enterobacter amnigenus).